A 61-amino-acid chain; its full sequence is Large ribosomal subunit protein uL30 (61 aa).

It belongs to the universal ribosomal protein uL30 family. Part of the 50S ribosomal subunit.

This chain is Large ribosomal subunit protein uL30, found in Chromohalobacter salexigens (strain ATCC BAA-138 / DSM 3043 / CIP 106854 / NCIMB 13768 / 1H11).